Consider the following 514-residue polypeptide: uncharacterized protein (514 aa).

The segment covering 1–15 (MSSPRGASSMSSRSP) has biased composition (low complexity). The disordered stretch occupies residues 1 to 22 (MSSPRGASSMSSRSPVNLEPES).

This is an uncharacterized protein from Ictaluridae (bullhead catfishes).